Consider the following 401-residue polypeptide: Subtilisin-like protease 10 (401 aa).

The first 19 residues, 1–19 (MLFLKAVIAILSVLPAADA), serve as a signal peptide directing secretion. Residues 20–116 (AAILNFENKQ…IEPDRMASAQ (97 aa)) constitute a propeptide that is removed on maturation. One can recognise an Inhibitor I9 domain in the interval 35-112 (SYIVVLKNDI…QVDYIEPDRM (78 aa)). Positions 126–401 (SWGLGRISHQ…NRLLYNGSGQ (276 aa)) constitute a Peptidase S8 domain. Catalysis depends on charge relay system residues Asp-158 and His-189. N-linked (GlcNAc...) asparagine glycosylation is present at Asn-250. The active-site Charge relay system is Ser-347. The N-linked (GlcNAc...) asparagine glycan is linked to Asn-397.

Belongs to the peptidase S8 family.

The protein resides in the secreted. Functionally, secreted subtilisin-like serine protease with keratinolytic activity that contributes to pathogenicity. The chain is Subtilisin-like protease 10 (SUB10) from Arthroderma otae (strain ATCC MYA-4605 / CBS 113480) (Microsporum canis).